A 212-amino-acid polypeptide reads, in one-letter code: NEDD4 family-interacting protein 1 (212 aa).

The segment covering 1 to 14 (MSEQSSSSRYQQLQ) has biased composition (polar residues). A disordered region spans residues 1–40 (MSEQSSSSRYQQLQNEEEPGENAQASADAPPPYSSIAGES). Residues 1–107 (MSEQSSSSRY…ADQLRIGNDG (107 aa)) are Cytoplasmic-facing. 2 consecutive short sequence motifs (PPxY motif) follow at residues 30–33 (PPPY) and 55–58 (PPSY). Residues 108–128 (IFMLTFFMAFLFNWIGFFLSF) traverse the membrane as a helical segment. Topologically, residues 129–134 (CLTSSA) are extracellular. A helical membrane pass occupies residues 135-155 (AGRYGAISGFGLSLIKWILIV). Over 156–163 (RFSTYFPG) the chain is Cytoplasmic. The helical transmembrane segment at 164–184 (YFDGQYWLWWVFLVLGFLLFL) threads the bilayer. Topologically, residues 185–212 (RGFINYAKVRKMPDNFSTLPRTRVLFIY) are extracellular.

The protein localises to the golgi apparatus membrane. Functionally, may play a role in Golgi structure maintenance. The sequence is that of NEDD4 family-interacting protein 1 (ndfip1) from Xenopus laevis (African clawed frog).